A 399-amino-acid chain; its full sequence is Enoyl-[acyl-carrier-protein] reductase [NADH] (399 aa).

NAD(+) is bound by residues 48–53, 74–75, 111–112, and 139–140; these read GASTGY, FE, DA, and LA. Tyr225 lines the substrate pocket. Residue Tyr235 is the Proton donor of the active site. Residues Lys244 and 273–275 contribute to the NAD(+) site; that span reads VVT.

This sequence belongs to the TER reductase family. As to quaternary structure, monomer.

The enzyme catalyses a 2,3-saturated acyl-[ACP] + NAD(+) = a (2E)-enoyl-[ACP] + NADH + H(+). The protein operates within lipid metabolism; fatty acid biosynthesis. In terms of biological role, involved in the final reduction of the elongation cycle of fatty acid synthesis (FAS II). Catalyzes the reduction of a carbon-carbon double bond in an enoyl moiety that is covalently linked to an acyl carrier protein (ACP). In Serratia proteamaculans (strain 568), this protein is Enoyl-[acyl-carrier-protein] reductase [NADH].